The chain runs to 340 residues: DNA-directed RNA polymerase subunit alpha (340 aa).

The alpha N-terminal domain (alpha-NTD) stretch occupies residues 1–236 (MLSLSKNWNT…EQLQLFISFE (236 aa)). Residues 251–340 (FSPYLLKRVD…LSKRYEDSYN (90 aa)) form an alpha C-terminal domain (alpha-CTD) region.

Belongs to the RNA polymerase alpha chain family. In terms of assembly, homodimer. The RNAP catalytic core consists of 2 alpha, 1 beta, 1 beta' and 1 omega subunit. When a sigma factor is associated with the core the holoenzyme is formed, which can initiate transcription.

The catalysed reaction is RNA(n) + a ribonucleoside 5'-triphosphate = RNA(n+1) + diphosphate. DNA-dependent RNA polymerase catalyzes the transcription of DNA into RNA using the four ribonucleoside triphosphates as substrates. The polypeptide is DNA-directed RNA polymerase subunit alpha (Rickettsia conorii (strain ATCC VR-613 / Malish 7)).